The chain runs to 67 residues: Small ribosomal subunit protein eS31 (67 aa).

Zn(2+)-binding residues include Cys31, Cys34, Cys49, and Cys52. The C4-type zinc-finger motif lies at 31–52; the sequence is CPKCGAGVFMAEHLNRFACGKC.

The protein belongs to the eukaryotic ribosomal protein eS31 family. Part of the 30S ribosomal subunit. Zn(2+) is required as a cofactor.

The sequence is that of Small ribosomal subunit protein eS31 from Methanococcus maripaludis (strain C5 / ATCC BAA-1333).